A 118-amino-acid chain; its full sequence is Small ribosomal subunit protein uS13 (118 aa).

A disordered region spans residues 94–118 (SLPLRGQRTKTNARTRKGPRKPIKK).

The protein belongs to the universal ribosomal protein uS13 family. As to quaternary structure, part of the 30S ribosomal subunit. Forms a loose heterodimer with protein S19. Forms two bridges to the 50S subunit in the 70S ribosome.

Functionally, located at the top of the head of the 30S subunit, it contacts several helices of the 16S rRNA. In the 70S ribosome it contacts the 23S rRNA (bridge B1a) and protein L5 of the 50S subunit (bridge B1b), connecting the 2 subunits; these bridges are implicated in subunit movement. Contacts the tRNAs in the A and P-sites. The sequence is that of Small ribosomal subunit protein uS13 from Shewanella oneidensis (strain ATCC 700550 / JCM 31522 / CIP 106686 / LMG 19005 / NCIMB 14063 / MR-1).